Reading from the N-terminus, the 625-residue chain is DNA mismatch repair protein MutL (625 aa).

Residues 404–427 (PPPRNAPQSTGMPSMAGTGLPATS) form a disordered region.

This sequence belongs to the DNA mismatch repair MutL/HexB family.

Its function is as follows. This protein is involved in the repair of mismatches in DNA. It is required for dam-dependent methyl-directed DNA mismatch repair. May act as a 'molecular matchmaker', a protein that promotes the formation of a stable complex between two or more DNA-binding proteins in an ATP-dependent manner without itself being part of a final effector complex. The sequence is that of DNA mismatch repair protein MutL from Xanthomonas oryzae pv. oryzae (strain MAFF 311018).